We begin with the raw amino-acid sequence, 275 residues long: Large ribosomal subunit protein uL2 (275 aa).

Disordered regions lie at residues 24 to 47 (IHKGSPHASLLESQSKTGGRNHHG) and 227 to 261 (PVDHPHGGGEAKSGQGNPHPVTPWGVPTKGYKTRK).

It belongs to the universal ribosomal protein uL2 family. As to quaternary structure, part of the 50S ribosomal subunit. Forms a bridge to the 30S subunit in the 70S ribosome.

In terms of biological role, one of the primary rRNA binding proteins. Required for association of the 30S and 50S subunits to form the 70S ribosome, for tRNA binding and peptide bond formation. It has been suggested to have peptidyltransferase activity; this is somewhat controversial. Makes several contacts with the 16S rRNA in the 70S ribosome. The sequence is that of Large ribosomal subunit protein uL2 from Xylella fastidiosa (strain M12).